The chain runs to 127 residues: LIM domain-containing protein 2 (127 aa).

At M1 the chain carries N-acetylmethionine. Residues 1 to 24 form a disordered region; that stretch reads MFQAAGAAQATPSHDAKGGGSSTV. Residues 38–98 form the LIM zinc-binding domain; it reads ETCAACQKTV…KPHFQQLFKS (61 aa). Positions 40, 43, 61, 64, 67, 70, 88, and 91 each coordinate Zn(2+).

Interacts with ILK.

It localises to the cytoplasm. The protein localises to the nucleus. Its function is as follows. Acts as an activator of the protein-kinase ILK, thereby regulating cell motility. The polypeptide is LIM domain-containing protein 2 (Homo sapiens (Human)).